The primary structure comprises 205 residues: Small ribosomal subunit protein mS26 (205 aa).

A mitochondrion-targeting transit peptide spans 1 to 26; the sequence is MLRALSTLGARPLGRPPAQFLLLARG.

This sequence belongs to the mitochondrion-specific ribosomal protein mS26 family. As to quaternary structure, component of the mitochondrial ribosome small subunit (28S) which comprises a 12S rRNA and about 30 distinct proteins.

Its subcellular location is the mitochondrion. In Bos taurus (Bovine), this protein is Small ribosomal subunit protein mS26 (MRPS26).